Reading from the N-terminus, the 484-residue chain is Glutamyl-tRNA(Gln) amidotransferase subunit A (484 aa).

Residues Lys76 and Ser151 each act as charge relay system in the active site. Ser175 acts as the Acyl-ester intermediate in catalysis.

It belongs to the amidase family. GatA subfamily. Heterotrimer of A, B and C subunits.

The enzyme catalyses L-glutamyl-tRNA(Gln) + L-glutamine + ATP + H2O = L-glutaminyl-tRNA(Gln) + L-glutamate + ADP + phosphate + H(+). Allows the formation of correctly charged Gln-tRNA(Gln) through the transamidation of misacylated Glu-tRNA(Gln) in organisms which lack glutaminyl-tRNA synthetase. The reaction takes place in the presence of glutamine and ATP through an activated gamma-phospho-Glu-tRNA(Gln). In Halorhodospira halophila (strain DSM 244 / SL1) (Ectothiorhodospira halophila (strain DSM 244 / SL1)), this protein is Glutamyl-tRNA(Gln) amidotransferase subunit A.